Consider the following 1576-residue polypeptide: eIF-2-alpha kinase GCN2 (1576 aa).

In terms of domain architecture, RWD spans 16–127; the sequence is NEIEALKAIF…SIVQDYLNDW (112 aa). The segment at 180-204 is disordered; the sequence is QDELQRRSYETPQSSSKKKTNSKET. Protein kinase domains follow at residues 235–511 and 556–928; these read VLPL…HVIR and FEEL…EEFI. Residues 562–570 and lysine 585 each bind ATP; that span reads LGRGGFGEV. The disordered stretch occupies residues 673-714; it reads YNSSADEEDPEASDISFQYSNTSDKEGSSDKDSSIEEASSVK. Residues 695-706 show a composition bias toward basic and acidic residues; the sequence is SDKEGSSDKDSS. Catalysis depends on aspartate 772, which acts as the Proton acceptor.

The protein belongs to the protein kinase superfamily. Ser/Thr protein kinase family. GCN2 subfamily. As to quaternary structure, homodimer; homodimerization is important for kinase activation by uncharged tRNAs. Interacts (via N-terminal RWD domain) with gcn1 (via N- and C-terminus); this interaction stimulates gcn2 kinase activity in a gcn20-dependent manner in response to amino acid starvation. Interacts (via N-terminus) with the gcn1-gcn20 complex on translating ribosomes in amino acid-starved cells; gcn1 may bind near the ribosomal A-site and promotes the transfer of uncharged tRNAs from the A-site to the tRNA-binding domain in gcn2 for its subsequent kinase activation, and hence allowing fil1 translational activation and derepression of amino acid biosynthetic genes. Autophosphorylated.

It is found in the cytoplasm. The catalysed reaction is L-seryl-[protein] + ATP = O-phospho-L-seryl-[protein] + ADP + H(+). The enzyme catalyses L-threonyl-[protein] + ATP = O-phospho-L-threonyl-[protein] + ADP + H(+). The integrated stress response (ISR) is activated in response to conditions that promote ribosome collisions: gcn1, which acts as a ribosome collision sensor, activates gcn2. The RQC pathway and the integrated stress response (ISR) antagonize each other: hel2 prevents the activation of gcn2, while gcn2 suppresses RQC activation. Ribosome stalling-induced integrated stress response prefers ribosomes with empty A sites. The kinase activity is stimulated upon binding to uncharged tRNAs. In terms of biological role, metabolic-stress sensing protein kinase that phosphorylates the alpha subunit of eukaryotic translation initiation factor 2 (eIF-2-alpha/SUI2) on 'Ser-52' in response to low amino acid, carbon, or purine availability. Required for adapatation to nutrient starvation by acting as a key component of the integrated stress response (ISR), by which cells alter their translational and transcriptional output in response to starvation. Converts phosphorylated eIF-2-alpha/SUI2 either to a competitive inhibitor of translation initiation factor eIF-2B, leading to a global protein synthesis repression, and thus to a reduced overall utilization of amino acids, or to a translational initiation activation of specific mRNAs, such as the transcriptional activator GCN4, and hence allowing GCN4-mediated reprogramming of transcription to alleviate nutrient depletion. Binds uncharged tRNAs. This is eIF-2-alpha kinase GCN2 from Schizosaccharomyces pombe (strain 972 / ATCC 24843) (Fission yeast).